A 460-amino-acid chain; its full sequence is UDP-glucuronate 4-epimerase 6 (460 aa).

The next 2 helical transmembrane spans lie at 41-61 and 111-131; these read ATLL…PPLS and GLSV…SLAL. 113 to 144 contacts NAD(+); that stretch reads SVLVTGAAGFVGSHCSLALRKRGDGVLGFDNF. Tyr263 (proton acceptor) is an active-site residue.

The protein belongs to the NAD(P)-dependent epimerase/dehydratase family. In terms of assembly, homodimer. In roots, leaf veins, siliques, flowers, pollen and stems.

It is found in the golgi apparatus. The protein localises to the golgi stack membrane. The enzyme catalyses UDP-alpha-D-glucuronate = UDP-alpha-D-galacturonate. In terms of biological role, involved in the synthesis of the negatively charged monosaccharide that forms the backbone of pectic cell wall components. The sequence is that of UDP-glucuronate 4-epimerase 6 (GAE6) from Arabidopsis thaliana (Mouse-ear cress).